The following is a 690-amino-acid chain: DNA ligase (690 aa).

NAD(+) contacts are provided by residues 36 to 40, 85 to 86, and Glu-124; these read DAVYD and SL. Lys-126 acts as the N6-AMP-lysine intermediate in catalysis. 4 residues coordinate NAD(+): Arg-147, Glu-184, Lys-308, and Lys-332. Zn(2+) contacts are provided by Cys-426, Cys-429, Cys-444, and Cys-449. Residues 614–690 form the BRCT domain; that stretch reads NQSNVFDGKS…INENELKLLL (77 aa).

The protein belongs to the NAD-dependent DNA ligase family. LigA subfamily. The cofactor is Mg(2+). Mn(2+) is required as a cofactor.

It carries out the reaction NAD(+) + (deoxyribonucleotide)n-3'-hydroxyl + 5'-phospho-(deoxyribonucleotide)m = (deoxyribonucleotide)n+m + AMP + beta-nicotinamide D-nucleotide.. In terms of biological role, DNA ligase that catalyzes the formation of phosphodiester linkages between 5'-phosphoryl and 3'-hydroxyl groups in double-stranded DNA using NAD as a coenzyme and as the energy source for the reaction. It is essential for DNA replication and repair of damaged DNA. The polypeptide is DNA ligase (Prochlorococcus marinus (strain NATL1A)).